We begin with the raw amino-acid sequence, 519 residues long: Nitrogen fixation regulatory protein (519 aa).

One can recognise a PAS 1 domain in the interval 23–93 (LPEIFRQTVE…QALWGRLAQK (71 aa)). A PAC domain is found at 94 to 148 (KPWSGVLVNRRKDKTLYLAELTVAPVLNEAGETIYYLGMHRDTSELHELEQRVNN). Residues 151 to 217 (LMIEAVVNAA…FETLENQGSA (67 aa)) enclose the PAS 2 domain. Residues 302–517 (AAIHRLQGPV…RIVVELPFSA (216 aa)) form the Histidine kinase domain. Position 305 is a phosphohistidine; by autocatalysis (His305).

Requires FAD as cofactor.

The enzyme catalyses ATP + protein L-histidine = ADP + protein N-phospho-L-histidine.. Functionally, required for the inhibition of NifA activity in response to oxygen and low level of fixed nitrogen. This Azotobacter vinelandii protein is Nitrogen fixation regulatory protein (nifL).